The primary structure comprises 254 residues: Hydroxyethylthiazole kinase (254 aa).

Residue Met-40 participates in substrate binding. ATP contacts are provided by Arg-116 and Ser-162. Residue Gly-189 participates in substrate binding.

This sequence belongs to the Thz kinase family. Mg(2+) is required as a cofactor.

It catalyses the reaction 5-(2-hydroxyethyl)-4-methylthiazole + ATP = 4-methyl-5-(2-phosphooxyethyl)-thiazole + ADP + H(+). Its pathway is cofactor biosynthesis; thiamine diphosphate biosynthesis; 4-methyl-5-(2-phosphoethyl)-thiazole from 5-(2-hydroxyethyl)-4-methylthiazole: step 1/1. Catalyzes the phosphorylation of the hydroxyl group of 4-methyl-5-beta-hydroxyethylthiazole (THZ). The polypeptide is Hydroxyethylthiazole kinase (Limosilactobacillus fermentum (strain NBRC 3956 / LMG 18251) (Lactobacillus fermentum)).